The primary structure comprises 154 residues: Universal stress protein Sll1388 (154 aa).

The protein belongs to the universal stress protein A family.

This chain is Universal stress protein Sll1388, found in Synechocystis sp. (strain ATCC 27184 / PCC 6803 / Kazusa).